The primary structure comprises 430 residues: Drebrin-like protein (430 aa).

Positions 4 to 133 (NLSRNGPALQ…EPECIMEKVA (130 aa)) constitute an ADF-H domain. Phosphothreonine is present on Thr-26. Residues Gly-137 and Ser-160 each carry the phosphoserine modification. Lys-176 is modified (N6-acetyllysine). A coiled-coil region spans residues 176-231 (KDSFWAKAEKEEENRRLEEKRRAEEAQRQLEQERRERELREAARREQRYQEQGGEA). A phosphoserine mark is found at Ala-183 and Ser-232. Residues 219-283 (RREQRYQEQG…SSPQPGKLRS (65 aa)) are disordered. Polar residues predominate over residues 233–244 (PQRTWEQQQEVV). The span at 245-267 (SRNRNEQESAVHPREIFKQKERA) shows a compositional bias: basic and acidic residues. The segment covering 268-277 (MSTTSISSPQ) has biased composition (polar residues). Residues Ser-269, Ser-272, Ser-275, and Ser-283 each carry the phosphoserine modification. N6-acetyllysine is present on Lys-288. Thr-291 bears the Phosphothreonine mark. Tyr-334 and Tyr-344 each carry phosphotyrosine. The SH3 domain maps to 371 to 430 (GQGLCARALYDYQAADDTEISFDPENLITGIEVIDEGWWRGYGPDGHFGMFPANYVELIE).

It belongs to the ABP1 family. In terms of assembly, interacts with SHANK2, SHANK3 and SYN1. Interacts with FGD1 and DNM1. Interacts with ANKRD54. Interacts with COBL. Interacts with WASL and WIPF1. Interacts with MAP4K1 and PRAM1. In terms of processing, degraded by caspases during apoptosis.

The protein resides in the cytoplasm. It is found in the cytoskeleton. It localises to the cell projection. Its subcellular location is the lamellipodium. The protein localises to the ruffle. The protein resides in the cell cortex. It is found in the cytosol. It localises to the synapse. Its subcellular location is the perikaryon. The protein localises to the neuron projection. The protein resides in the cell membrane. It is found in the cytoplasmic vesicle. It localises to the clathrin-coated vesicle membrane. Its subcellular location is the golgi apparatus membrane. The protein localises to the podosome. The protein resides in the early endosome. It is found in the dendrite. It localises to the postsynaptic density. In terms of biological role, adapter protein that binds F-actin and DNM1, and thereby plays a role in receptor-mediated endocytosis. Plays a role in the reorganization of the actin cytoskeleton, formation of cell projections, such as neurites, in neuron morphogenesis and synapse formation via its interaction with WASL and COBL. Does not bind G-actin and promote actin polymerization by itself. Required for the formation of organized podosome rosettes. May act as a common effector of antigen receptor-signaling pathways in leukocytes. Acts as a key component of the immunological synapse that regulates T-cell activation by bridging TCRs and the actin cytoskeleton to gene activation and endocytic processes. This is Drebrin-like protein (DBNL) from Homo sapiens (Human).